Reading from the N-terminus, the 128-residue chain is Protein yippee-like At3g08990 (128 aa).

A Yippee domain is found at 12–109; that stretch reads LVYSCKYCQT…LERFKVLGPY (98 aa). Zn(2+) is bound by residues Cys-16, Cys-19, Cys-72, and Cys-75.

This sequence belongs to the yippee family.

This chain is Protein yippee-like At3g08990, found in Arabidopsis thaliana (Mouse-ear cress).